The primary structure comprises 344 residues: tRNA N6-adenosine threonylcarbamoyltransferase (344 aa).

The Fe cation site is built by H119 and H123. Substrate is bound by residues 141–145 (VVSGG), D174, G187, D191, and N280. A Fe cation-binding site is contributed by D310.

This sequence belongs to the KAE1 / TsaD family. It depends on Fe(2+) as a cofactor.

The protein localises to the cytoplasm. It catalyses the reaction L-threonylcarbamoyladenylate + adenosine(37) in tRNA = N(6)-L-threonylcarbamoyladenosine(37) in tRNA + AMP + H(+). Functionally, required for the formation of a threonylcarbamoyl group on adenosine at position 37 (t(6)A37) in tRNAs that read codons beginning with adenine. Is involved in the transfer of the threonylcarbamoyl moiety of threonylcarbamoyl-AMP (TC-AMP) to the N6 group of A37, together with TsaE and TsaB. TsaD likely plays a direct catalytic role in this reaction. This Listeria innocua serovar 6a (strain ATCC BAA-680 / CLIP 11262) protein is tRNA N6-adenosine threonylcarbamoyltransferase.